Consider the following 659-residue polypeptide: DNA ligase (659 aa).

NAD(+) is bound by residues 31-35, 80-81, and Glu109; these read DFVYD and SL. Lys111 serves as the catalytic N6-AMP-lysine intermediate. NAD(+)-binding residues include Arg132, Glu166, Lys281, and Lys305. Zn(2+) is bound by residues Cys398, Cys401, Cys416, and Cys421. The BRCT domain occupies 581–659; it reads VTTHPFNGKT…EATFKVKINE (79 aa).

It belongs to the NAD-dependent DNA ligase family. LigA subfamily. It depends on Mg(2+) as a cofactor. Mn(2+) is required as a cofactor.

The catalysed reaction is NAD(+) + (deoxyribonucleotide)n-3'-hydroxyl + 5'-phospho-(deoxyribonucleotide)m = (deoxyribonucleotide)n+m + AMP + beta-nicotinamide D-nucleotide.. DNA ligase that catalyzes the formation of phosphodiester linkages between 5'-phosphoryl and 3'-hydroxyl groups in double-stranded DNA using NAD as a coenzyme and as the energy source for the reaction. It is essential for DNA replication and repair of damaged DNA. This Acholeplasma laidlawii (strain PG-8A) protein is DNA ligase.